Here is a 769-residue protein sequence, read N- to C-terminus: Sensor histidine kinase ComP (769 aa).

Topologically, residues 1–9 (MKNLIKKFT) are cytoplasmic. The helical transmembrane segment at 10-33 (IAVIVLSILYISYTTYISMNGIII) threads the bilayer. Residues 34 to 113 (GTKIHKNDKS…DFDLVTLNRP (80 aa)) lie on the Extracellular side of the membrane. A helical transmembrane segment spans residues 114–134 (YSFFLFVLPLFFYFLSIICIF). The Cytoplasmic segment spans residues 135–144 (YILKVNKKRR). The chain crosses the membrane as a helical span at residues 145–167 (SFAAYILILLLLDISIAYISAGG). The Extracellular segment spans residues 168–235 (PFRGHIINRY…QDYLQVDIDF (68 aa)). Residues 236 to 257 (LATLNLVSFATLTLFSFSAIYL) form a helical membrane-spanning segment. The Cytoplasmic segment spans residues 258–272 (HLNKYKYAEHSFILK). A helical transmembrane segment spans residues 273-295 (LLILTNTLSFAPFLIFFVLPIIF). Residues 296–299 (TGNY) lie on the Extracellular side of the membrane. Residues 300–323 (IFPALASASLLVLIPFGLVYQFVA) form a helical membrane-spanning segment. Residues 324–337 (NKMFDIEFILGRMR) are Cytoplasmic-facing. A helical transmembrane segment spans residues 338 to 357 (YYALLAMIPTLLIVGALVLF). Residues 358–361 (DVMD) are Extracellular-facing. A helical membrane pass occupies residues 362-383 (IQMNPVRQTVFFFVVMFAVFYF). The Cytoplasmic segment spans residues 384–769 (KEVMDFKFRL…GFKADIEIEL (386 aa)). The region spanning 571 to 769 (LARDLHDSVL…GFKADIEIEL (199 aa)) is the Histidine kinase domain. His-576 carries the post-translational modification Phosphohistidine; by autocatalysis.

Post-translationally, autophosphorylates on a histidine and transfers the phosphate group onto an aspartate in ComA, thus activating it.

It is found in the cell membrane. It catalyses the reaction ATP + protein L-histidine = ADP + protein N-phospho-L-histidine.. Sensor in the two-component regulatory system ComP/ComA involved in a major quorum response pathway that regulates the development of genetic competence. Plays a role in sporulation, at least partly interchangeable with that of SpoIIJ. Probably activates ComA by phosphorylation. The chain is Sensor histidine kinase ComP (comP) from Bacillus subtilis (strain 168).